Here is a 479-residue protein sequence, read N- to C-terminus: Shugoshin (479 aa).

Residues 36-76 adopt a coiled-coil conformation; the sequence is SLRIRSLESEVSNLLSENVSLREQIITLTQELERFEAARTL. Disordered stretches follow at residues 109–145, 220–247, and 263–479; these read SRAV…GFLD, EHSL…QADT, and AKRK…SMPP. The span at 123–132 shows a compositional bias: basic and acidic residues; it reads QSRESGPKEV. Residues 270 to 286 show a composition bias toward acidic residues; that stretch reads EDDESLFESSPSEDDEF. 2 stretches are compositionally biased toward polar residues: residues 290 to 303 and 318 to 328; these read RPAQ…QNEH and QSPTLSSQNDH. Composition is skewed to basic and acidic residues over residues 335–352 and 379–388; these read PQSE…RVLE and GYNEKSEKPL. The segment covering 400–411 has biased composition (polar residues); sequence KNASPKKSSTRT.

Belongs to the shugoshin family.

The protein localises to the nucleus. It is found in the chromosome. It localises to the centromere. In terms of biological role, plays a central role in chromosome cohesion during cell division by preventing premature dissociation of cohesin complex from centromeres after prophase, when most of cohesin complex dissociates from chromosomes arms. In Emericella nidulans (strain FGSC A4 / ATCC 38163 / CBS 112.46 / NRRL 194 / M139) (Aspergillus nidulans), this protein is Shugoshin (sgo1).